A 398-amino-acid polypeptide reads, in one-letter code: UDP-N-acetylglucosamine--N-acetylmuramyl-(pentapeptide) pyrophosphoryl-undecaprenol N-acetylglucosamine transferase (398 aa).

Residues 15 to 17 (TGG), N125, R168, S196, and Q297 contribute to the UDP-N-acetyl-alpha-D-glucosamine site.

It belongs to the glycosyltransferase 28 family. MurG subfamily.

The protein localises to the cell inner membrane. The enzyme catalyses di-trans,octa-cis-undecaprenyl diphospho-N-acetyl-alpha-D-muramoyl-L-alanyl-D-glutamyl-meso-2,6-diaminopimeloyl-D-alanyl-D-alanine + UDP-N-acetyl-alpha-D-glucosamine = di-trans,octa-cis-undecaprenyl diphospho-[N-acetyl-alpha-D-glucosaminyl-(1-&gt;4)]-N-acetyl-alpha-D-muramoyl-L-alanyl-D-glutamyl-meso-2,6-diaminopimeloyl-D-alanyl-D-alanine + UDP + H(+). Its pathway is cell wall biogenesis; peptidoglycan biosynthesis. Functionally, cell wall formation. Catalyzes the transfer of a GlcNAc subunit on undecaprenyl-pyrophosphoryl-MurNAc-pentapeptide (lipid intermediate I) to form undecaprenyl-pyrophosphoryl-MurNAc-(pentapeptide)GlcNAc (lipid intermediate II). In Erythrobacter litoralis (strain HTCC2594), this protein is UDP-N-acetylglucosamine--N-acetylmuramyl-(pentapeptide) pyrophosphoryl-undecaprenol N-acetylglucosamine transferase.